Here is a 186-residue protein sequence, read N- to C-terminus: ATP synthase subunit delta (186 aa).

It belongs to the ATPase delta chain family. As to quaternary structure, F-type ATPases have 2 components, F(1) - the catalytic core - and F(0) - the membrane proton channel. F(1) has five subunits: alpha(3), beta(3), gamma(1), delta(1), epsilon(1). F(0) has three main subunits: a(1), b(2) and c(10-14). The alpha and beta chains form an alternating ring which encloses part of the gamma chain. F(1) is attached to F(0) by a central stalk formed by the gamma and epsilon chains, while a peripheral stalk is formed by the delta and b chains.

The protein resides in the cell inner membrane. Functionally, f(1)F(0) ATP synthase produces ATP from ADP in the presence of a proton or sodium gradient. F-type ATPases consist of two structural domains, F(1) containing the extramembraneous catalytic core and F(0) containing the membrane proton channel, linked together by a central stalk and a peripheral stalk. During catalysis, ATP synthesis in the catalytic domain of F(1) is coupled via a rotary mechanism of the central stalk subunits to proton translocation. In terms of biological role, this protein is part of the stalk that links CF(0) to CF(1). It either transmits conformational changes from CF(0) to CF(1) or is implicated in proton conduction. The chain is ATP synthase subunit delta from Nitrobacter winogradskyi (strain ATCC 25391 / DSM 10237 / CIP 104748 / NCIMB 11846 / Nb-255).